The sequence spans 416 residues: Ena/VASP-like protein (416 aa).

The region spanning 1 to 112 (MSEQSICQAR…NAMLFALNIM (112 aa)) is the WH1 domain. The segment covering 114–129 (SQEGGPSSQRQVQNGP) has biased composition (polar residues). Disordered stretches follow at residues 114 to 133 (SQEG…SPDE) and 141 to 369 (VMEQ…PAGS). Ser130 bears the Phosphoserine mark. Residues 141-157 (VMEQHQQQRQESLERRT) are compositionally biased toward basic and acidic residues. Over residues 169-180 (PSSAASAPVSCS) the composition is skewed to low complexity. Residues 181-206 (GPPPPPPPPVPPPPTGATPPPPPPLP) show a composition bias toward pro residues. An EVH2 block A region spans residues 222–242 (GLAAAIAGAKLRRVQRPEDAS). The EVH2 stretch occupies residues 222–413 (GLAAAIAGAK…DAIRQELSGI (192 aa)). The KLKR signature appears at 231–234 (KLRR). Over residues 242 to 253 (SGGSSPSGTSKS) the composition is skewed to low complexity. 2 positions are modified to phosphoserine: Ser246 and Ser259. Residues 265–282 (GGLMEEMNKLLAKRRKAA) form an EVH2 block B region. Over residues 299–320 (EDPSTSPSPGTRAASQPPNSSE) the composition is skewed to polar residues. 8 positions are modified to phosphoserine: Ser304, Ser306, Ser329, Ser331, Ser341, Ser349, Ser354, and Ser369. Residues 321 to 331 (AGRKPWERSNS) are compositionally biased toward basic and acidic residues. Positions 342–362 (RTPSVAKSPEAKSPLQSQPHS) are required for interaction with ZDHHC17. Residues 379–413 (DLDRMKQEILEEVVRELHKVKEEIIDAIRQELSGI) are EVH2 block C.

The protein belongs to the Ena/VASP family. As to quaternary structure, homotetramer. Binds to the SH3 domains of ABL1, LYN and SRC. Also binds to profilin, with preference for isoform IIa of PFN2, and the WW domain of APBB1/FE65. Binds to SEMA6A. Interacts, via the Pro-rich region, with the C-terminal SH3 domain of DNMBP. Interacts with RAPH1. Binds, via the EVH1 domain, the Pro-rich domain of Listeria monocytogenes actA. Binds, via the EVH1 domain, the Pro-rich domain of ZYX. Interacts with FYB1. Interacts with ZDHHC17. Phosphorylated by PKA; phosphorylation abolishes binding to SH3 domains of ABL and SRC.

The protein localises to the cytoplasm. The protein resides in the cytoskeleton. It is found in the stress fiber. It localises to the cell projection. Its subcellular location is the lamellipodium. In terms of biological role, ena/VASP proteins are actin-associated proteins involved in a range of processes dependent on cytoskeleton remodeling and cell polarity such as axon guidance and lamellipodial and filopodial dynamics in migrating cells. EVL enhances actin nucleation and polymerization. This is Ena/VASP-like protein (EVL) from Homo sapiens (Human).